We begin with the raw amino-acid sequence, 485 residues long: MELYKLKAHELKDMISKKEVKVEEVTNSFLNRIEEVDEKVNALLYVAKEEAVNTAKELDKKIESGESLSGLSGVPVAIKDNISVKNMQNTCASKILEGYVSPYDATVIENLKKNNGVIIGKANMDEFAMGSSTENSAFKVSKNPWSLERVPGGSSGGSAVAVASLEAPISLGTETGGSVRQPASFCGLVGLKPTYGRISRYGVVAFGSTLDQVGMFARDVEDCALLTQNIAGLDKMDFTTVDTPVQDYSKSLNKDLKGRKIGIPKEFFEEGLDEGVREAVKEAIKVFEENGAEVKECSLPLSDYALAAYYIISSAEASSNLARFDGVRYGYRDAEAENALDLYVKSRSKGFGEEAKRRIMLGTYVLSKGYYDAYYKKALKVRSLIKNDFQRAFKEFDAIITPTTPTPAFRIGEKTKDVLSMYMSDIYTVPVNIAGIPSISVPCGFVSGLPVGLQIMGNYFKEDTLFNLAYSYEQSTKWHDKIANL.

Active-site charge relay system residues include Lys-79 and Ser-154. Catalysis depends on Ser-178, which acts as the Acyl-ester intermediate.

It belongs to the amidase family. GatA subfamily. As to quaternary structure, heterotrimer of A, B and C subunits.

It catalyses the reaction L-glutamyl-tRNA(Gln) + L-glutamine + ATP + H2O = L-glutaminyl-tRNA(Gln) + L-glutamate + ADP + phosphate + H(+). Functionally, allows the formation of correctly charged Gln-tRNA(Gln) through the transamidation of misacylated Glu-tRNA(Gln) in organisms which lack glutaminyl-tRNA synthetase. The reaction takes place in the presence of glutamine and ATP through an activated gamma-phospho-Glu-tRNA(Gln). The protein is Glutamyl-tRNA(Gln) amidotransferase subunit A 1 (gatA1) of Clostridium acetobutylicum (strain ATCC 824 / DSM 792 / JCM 1419 / IAM 19013 / LMG 5710 / NBRC 13948 / NRRL B-527 / VKM B-1787 / 2291 / W).